The primary structure comprises 567 residues: Phenylalanine--tRNA ligase beta subunit (567 aa).

One can recognise a B5 domain in the interval 284–359 (FAVRTKHVSH…RAYDFNDLTP (76 aa)). Mg(2+) contacts are provided by Asp-337, Asp-343, Asp-346, and Asp-347.

The protein belongs to the phenylalanyl-tRNA synthetase beta subunit family. Type 2 subfamily. In terms of assembly, tetramer of two alpha and two beta subunits. Mg(2+) serves as cofactor.

It localises to the cytoplasm. It catalyses the reaction tRNA(Phe) + L-phenylalanine + ATP = L-phenylalanyl-tRNA(Phe) + AMP + diphosphate + H(+). The polypeptide is Phenylalanine--tRNA ligase beta subunit (Halobacterium salinarum (strain ATCC 29341 / DSM 671 / R1)).